A 121-amino-acid chain; its full sequence is uncharacterized protein (121 aa).

Residues 6-26 traverse the membrane as a helical segment; that stretch reads ITTASILLVVIVAFCAAAPMI.

It is found in the membrane. This is an uncharacterized protein from Caenorhabditis elegans.